A 202-amino-acid chain; its full sequence is MKSLQIICLLFIFVARGSCRSCEICHNVGNDCGYDYVEECHSPEDQCGKVFLEISSAPLSIRSIHRNCFSSSLCKLEHFDVNTGQETYLRGRIHCCDEEKCEGRPFPGLPLSHPNGYVCPGVLGLFSEDSSESEAACKGDETKCINIVGYRKERFPGDIAYNIKGCVSSCPELRLSNRTHEERRNDLIKVECRDAVKITPSE.

An N-terminal signal peptide occupies residues 1–19; it reads MKSLQIICLLFIFVARGSC. 8 cysteine pairs are disulfide-bonded: Cys22-Cys47, Cys25-Cys32, Cys40-Cys68, Cys74-Cys95, Cys96-Cys101, Cys119-Cys144, Cys137-Cys166, and Cys170-Cys192.

This sequence belongs to the CNF-like-inhibitor family. As to quaternary structure, heteromer composed of subunit A and subunit B. In terms of tissue distribution, expressed by the liver.

The protein resides in the secreted. In terms of biological role, inhibits the enzymatic activity of the phospholipase A2 (PLA2). In Elaphe climacophora (Japanese rat snake), this protein is Phospholipase A2 inhibitor gamma subunit A.